The sequence spans 201 residues: 3-isopropylmalate dehydratase small subunit (201 aa).

Belongs to the LeuD family. LeuD type 1 subfamily. In terms of assembly, heterodimer of LeuC and LeuD.

The catalysed reaction is (2R,3S)-3-isopropylmalate = (2S)-2-isopropylmalate. Its pathway is amino-acid biosynthesis; L-leucine biosynthesis; L-leucine from 3-methyl-2-oxobutanoate: step 2/4. In terms of biological role, catalyzes the isomerization between 2-isopropylmalate and 3-isopropylmalate, via the formation of 2-isopropylmaleate. The protein is 3-isopropylmalate dehydratase small subunit of Rhizobium meliloti (strain 1021) (Ensifer meliloti).